The following is a 124-amino-acid chain: Multifunctional methyltransferase subunit TRM112 homolog A (124 aa).

The TRM112 domain occupies 2 to 120; the sequence is RLITHNMLSC…NKGIPNMLLH (119 aa).

It belongs to the TRM112 family. Interacts with TRM9.

Acts as an activator of both rRNA/tRNA and protein methyltransferases. Required for TRM9 tRNA methyltransferase activity. Involved in the regulation of cell division progression during organ growth. Required for the expression of cell cycle-related genes, and the G2-M phase progression during organogenesis. The chain is Multifunctional methyltransferase subunit TRM112 homolog A from Arabidopsis thaliana (Mouse-ear cress).